The chain runs to 114 residues: Small ribosomal subunit protein bS6 (114 aa).

It belongs to the bacterial ribosomal protein bS6 family.

Functionally, binds together with bS18 to 16S ribosomal RNA. This Protochlamydia amoebophila (strain UWE25) protein is Small ribosomal subunit protein bS6.